A 177-amino-acid chain; its full sequence is dCTP deaminase, dUMP-forming (177 aa).

DCTP is bound by residues 95 to 100 (RSSLGR), aspartate 112, 120 to 122 (TLE), glutamine 141, tyrosine 155, and glutamine 162. The active-site Proton donor/acceptor is glutamate 122.

Belongs to the dCTP deaminase family. In terms of assembly, homotrimer.

It carries out the reaction dCTP + 2 H2O = dUMP + NH4(+) + diphosphate. It functions in the pathway pyrimidine metabolism; dUMP biosynthesis; dUMP from dCTP: step 1/1. Functionally, bifunctional enzyme that catalyzes both the deamination of dCTP to dUTP and the hydrolysis of dUTP to dUMP without releasing the toxic dUTP intermediate. The sequence is that of dCTP deaminase, dUMP-forming from Hydrogenobaculum sp. (strain Y04AAS1).